The following is a 359-amino-acid chain: NF-kappa-B inhibitor beta (359 aa).

A phosphoserine; by RPS6KA1 mark is found at S19 and S23. 3 ANK repeats span residues 57-86, 93-122, and 126-155; these read DGDTALHLAVIHQHEPFLDFLLGFSAGTEY, LGQTALHLAAILGEASTVEKLYAAGAGVLV, and GGHTALHLACRVRAHTCACVLLQPRPSHPR. The disordered stretch occupies residues 153-194; it reads HPRDASDTYLTQSQDCTPDTSHAPAAVDSQPNPENEEEPRDE. Polar residues predominate over residues 160 to 172; that stretch reads TYLTQSQDCTPDT. ANK repeat units follow at residues 206-235, 240-269, and 273-302; these read DGHTPLHVAVIHKDAEMVRLLRDAGADLNK, CGRTPLHLAVEAQAASVLELLLKAGADPTA, and GGRTPLGSALLRPNPILARLLRAHGAPEPE. The disordered stretch occupies residues 298–359; that stretch reads APEPEDEDDK…KPLPDDPNPA (62 aa). 2 positions are modified to phosphoserine: S313 and S318. The segment covering 318-331 has biased composition (acidic residues); that stretch reads SDSDNRDEGDEYDD. Pro residues predominate over residues 344–359; it reads PPSPASKPLPDDPNPA.

The protein belongs to the NF-kappa-B inhibitor family. As to quaternary structure, interacts with THRB (via ligand-binding domain). Interacts with RELA and REL. Interacts with COMMD1. Interacts with inhibitor kappa B-interacting Ras-like NKIRAS1 and NKIRAS2. Phosphorylated by RPS6KA1; followed by degradation. Interaction with NKIRAS1 and NKIRAS2 probably prevents phosphorylation. As to expression, highly expressed in testis followed by spleen.

It is found in the cytoplasm. Its subcellular location is the nucleus. Its function is as follows. Inhibits NF-kappa-B by complexing with and trapping it in the cytoplasm. However, the unphosphorylated form resynthesized after cell stimulation is able to bind NF-kappa-B allowing its transport to the nucleus and protecting it to further NFKBIA-dependent inactivation. Association with inhibitor kappa B-interacting NKIRAS1 and NKIRAS2 prevent its phosphorylation rendering it more resistant to degradation, explaining its slower degradation. The polypeptide is NF-kappa-B inhibitor beta (Nfkbib) (Mus musculus (Mouse)).